We begin with the raw amino-acid sequence, 788 residues long: Multifunctional tryptophan biosynthesis protein (788 aa).

The Glutamine amidotransferase type-1 domain occupies 12–207 (DILMIDNFDS…MKLKGGTWEE (196 aa)). 63-65 (GPG) lines the L-glutamine pocket. Residue Cys91 is the Nucleophile; for GATase activity of the active site. 141 to 142 (SL) is a binding site for L-glutamine. Residues His181 and Glu183 each act as for GATase activity in the active site. Residues 238 to 503 (ILEKICAQRQ…DTRAFIRQLL (266 aa)) form an indole-3-glycerol phosphate synthase region. Positions 520–788 (LSRSCGIRTE…RAFVKAAKKL (269 aa)) are N-(5'-phosphoribosyl)anthranilate isomerase.

It carries out the reaction N-(5-phospho-beta-D-ribosyl)anthranilate = 1-(2-carboxyphenylamino)-1-deoxy-D-ribulose 5-phosphate. The catalysed reaction is 1-(2-carboxyphenylamino)-1-deoxy-D-ribulose 5-phosphate + H(+) = (1S,2R)-1-C-(indol-3-yl)glycerol 3-phosphate + CO2 + H2O. It catalyses the reaction chorismate + L-glutamine = anthranilate + pyruvate + L-glutamate + H(+). The protein operates within amino-acid biosynthesis; L-tryptophan biosynthesis; L-tryptophan from chorismate: step 1/5. It participates in amino-acid biosynthesis; L-tryptophan biosynthesis; L-tryptophan from chorismate: step 3/5. Its pathway is amino-acid biosynthesis; L-tryptophan biosynthesis; L-tryptophan from chorismate: step 4/5. Its function is as follows. Trifunctional enzyme bearing the Gln amidotransferase (GATase) domain of anthranilate synthase, indole-glycerolphosphate synthase, and phosphoribosylanthranilate isomerase activities. The sequence is that of Multifunctional tryptophan biosynthesis protein (TRPC) from Phanerodontia chrysosporium (White-rot fungus).